The chain runs to 120 residues: Small ribosomal subunit protein eS24 (120 aa).

The tract at residues 101–120 (RDAGTKQKKGGSKGGQGAKG) is disordered.

Belongs to the eukaryotic ribosomal protein eS24 family.

This is Small ribosomal subunit protein eS24 from Saccharolobus solfataricus (strain ATCC 35092 / DSM 1617 / JCM 11322 / P2) (Sulfolobus solfataricus).